Consider the following 192-residue polypeptide: Signal peptidase complex catalytic subunit SEC11C (192 aa).

Over 1–28 the chain is Cytoplasmic; the sequence is MVRAGAVGTHLPTSSLDIFGDLRKMNKR. A helical; Signal-anchor for type II membrane protein membrane pass occupies residues 29-48; the sequence is QLYYQVLNFAMIVSSALMIW. Residues 49-192 are Lumenal-facing; sequence KGLIVLTGSE…GAYVLLKRES (144 aa). Catalysis depends on charge relay system residues Ser68, His108, and Asp134. Positions 177 to 188 are C-terminal short (CTS) helix; sequence ALLAVMGAYVLL.

Belongs to the peptidase S26B family. Component of the signal peptidase complex paralog C (SPC-C) composed of a catalytic subunit SEC11C and three accessory subunits SPCS1, SPCS2 and SPCS3. Within the complex, interacts with SPCS2 and SPCS3. The complex induces a local thinning of the ER membrane which is used to measure the length of the signal peptide (SP) h-region of protein substrates. This ensures the selectivity of the complex towards h-regions shorter than 18-20 amino acids. In terms of processing, may undergo processing at the N-terminus.

Its subcellular location is the endoplasmic reticulum membrane. It catalyses the reaction Cleavage of hydrophobic, N-terminal signal or leader sequences from secreted and periplasmic proteins.. Catalytic component of the signal peptidase complex (SPC) which catalyzes the cleavage of N-terminal signal sequences from nascent proteins as they are translocated into the lumen of the endoplasmic reticulum. Specifically cleaves N-terminal signal peptides that contain a hydrophobic alpha-helix (h-region) shorter than 18-20 amino acids. This is Signal peptidase complex catalytic subunit SEC11C (Sec11c) from Mus musculus (Mouse).